We begin with the raw amino-acid sequence, 175 residues long: Sec-independent protein translocase protein TatB (175 aa).

A helical membrane pass occupies residues 1-21; it reads MLDLGLSKMALIGVVALVVLG. The disordered stretch occupies residues 155–175; sequence SGAARVARHQPASLRRPTRFF.

The protein belongs to the TatB family. As to quaternary structure, the Tat system comprises two distinct complexes: a TatABC complex, containing multiple copies of TatA, TatB and TatC subunits, and a separate TatA complex, containing only TatA subunits. Substrates initially bind to the TatABC complex, which probably triggers association of the separate TatA complex to form the active translocon.

It is found in the cell inner membrane. Part of the twin-arginine translocation (Tat) system that transports large folded proteins containing a characteristic twin-arginine motif in their signal peptide across membranes. Together with TatC, TatB is part of a receptor directly interacting with Tat signal peptides. TatB may form an oligomeric binding site that transiently accommodates folded Tat precursor proteins before their translocation. The chain is Sec-independent protein translocase protein TatB from Burkholderia lata (strain ATCC 17760 / DSM 23089 / LMG 22485 / NCIMB 9086 / R18194 / 383).